The chain runs to 106 residues: Small cardioactive peptide-related peptide (106 aa).

An N-terminal signal peptide occupies residues 1 to 20 (MFCKHLSFVAITICFLLVLA). Positions 21–41 (KTENEIQQKNIKFDQRTWRNM) are cleaved as a propeptide — amino-terminal spacer peptide. A Glutamine amide modification is found at Gln-52. A propeptide spans 55-106 (SDNQPDYTCCGMPLTKYVGICPIGMECCPGLKKVLQKSGQRTIYSVCVADAY) (carboxy-terminal spacer peptide).

Expression is seen in the peripheral and central nervous systems in tissues such as the brain, the inferior buccal ganglion, the gastric ganglion, the olfactory lobe, the peduncle lobe and the optic lobe. Expression in the brain is distributed in the median inferior frontal lobe, the superior buccal lobe, the prebranchial lobe and the pedal lobe. Not expressed in the vasomotor lobe or the palliovisceral lobe that controls the cardiac system.

The protein localises to the secreted. In terms of biological role, evokes contractions in the radula protractor muscle, and may regulate feeding behavior and gut motility by controlling muscle contraction of the buccal mass. This Octopus vulgaris (Common octopus) protein is Small cardioactive peptide-related peptide.